A 500-amino-acid chain; its full sequence is Potassium voltage-gated channel subfamily V member 1 (500 aa).

Residues 1 to 210 (MPSSGRALLD…EKPGSSTAAR (210 aa)) are Cytoplasmic-facing. A compositionally biased stretch (basic and acidic residues) spans 168-181 (KKDTEDQESQHESE). Residues 168–189 (KKDTEDQESQHESEQDFSQGPC) are disordered. Residues 211-231 (IFGVISIIFVVVSIINMALMS) form a helical membrane-spanning segment. The Extracellular segment spans residues 232-238 (AELSWLD). The helical transmembrane segment at 239–259 (LQLLEILEYVCISWFTGEFVL) threads the bilayer. The Cytoplasmic segment spans residues 260–276 (RFLCVRDRCRFLRKVPN). A helical membrane pass occupies residues 277-297 (IIDLLAILPFYITLLVESLSG). At 298–309 (SQTTQELENVGR) the chain is on the extracellular side. The chain crosses the membrane as a helical; Voltage-sensor span at residues 310-331 (IVQVLRLLRALRMLKLGRHSTG). Residues 332–345 (LRSLGMTITQCYEE) lie on the Cytoplasmic side of the membrane. The helical transmembrane segment at 346 to 366 (VGLLLLFLSVGISIFSTVEYF) threads the bilayer. The Selectivity filter motif lies at 392-397 (TVGYGD). A helical membrane pass occupies residues 407–427 (IVAFMCILSGILVLALPIAII). The Cytoplasmic segment spans residues 428-500 (NDRFSACYFT…RSSGGDDFWF (73 aa)).

Belongs to the potassium channel family. V (TC 1.A.1.2) subfamily. Kv8.1/KCNV1 sub-subfamily. In terms of assembly, heteromultimer with KCNB1 and KCNB2. Interacts with KCNC4 and KCND1. Detected in brain.

The protein resides in the cell membrane. Functionally, potassium channel subunit that does not form functional channels by itself. Modulates KCNB1 and KCNB2 channel activity by shifting the threshold for inactivation to more negative values and by slowing the rate of inactivation. Can down-regulate the channel activity of KCNB1, KCNB2, KCNC4 and KCND1, possibly by trapping them in intracellular membranes. In Homo sapiens (Human), this protein is Potassium voltage-gated channel subfamily V member 1 (KCNV1).